A 226-amino-acid polypeptide reads, in one-letter code: Sugar fermentation stimulation protein homolog (226 aa).

This sequence belongs to the SfsA family.

The polypeptide is Sugar fermentation stimulation protein homolog (Picrophilus torridus (strain ATCC 700027 / DSM 9790 / JCM 10055 / NBRC 100828 / KAW 2/3)).